A 485-amino-acid chain; its full sequence is Telomeric DNA-binding factor trf1 (485 aa).

A compositionally biased stretch (basic and acidic residues) spans 1-20; it reads MSKRSLDPSDDFKGQKRLAI. Residues 1–23 form a disordered region; that stretch reads MSKRSLDPSDDFKGQKRLAIDPE. The HTH myb-type domain occupies 400-457; sequence RRVANRRSWTKEEEEALLDGLDLVKGPRWSQILELYGPGGKKSEVLKYRNQVQLKDKA. The segment at residues 428–453 is a DNA-binding region (H-T-H motif); that stretch reads WSQILELYGPGGKKSEVLKYRNQVQL.

Homodimer.

Its subcellular location is the nucleus. Its function is as follows. Binds the telomeric double-stranded TTACAGG repeat and regulates telomere length. The sequence is that of Telomeric DNA-binding factor trf1 (trf1) from Schizosaccharomyces pombe (strain 972 / ATCC 24843) (Fission yeast).